The chain runs to 156 residues: 6,7-dimethyl-8-ribityllumazine synthase (156 aa).

5-amino-6-(D-ribitylamino)uracil is bound by residues F25, 59–61 (AFE), and 83–85 (AVI). 88–89 (AT) contributes to the (2S)-2-hydroxy-3-oxobutyl phosphate binding site. H91 serves as the catalytic Proton donor. F116 serves as a coordination point for 5-amino-6-(D-ribitylamino)uracil. Residue R130 coordinates (2S)-2-hydroxy-3-oxobutyl phosphate.

This sequence belongs to the DMRL synthase family.

It carries out the reaction (2S)-2-hydroxy-3-oxobutyl phosphate + 5-amino-6-(D-ribitylamino)uracil = 6,7-dimethyl-8-(1-D-ribityl)lumazine + phosphate + 2 H2O + H(+). It functions in the pathway cofactor biosynthesis; riboflavin biosynthesis; riboflavin from 2-hydroxy-3-oxobutyl phosphate and 5-amino-6-(D-ribitylamino)uracil: step 1/2. Its function is as follows. Catalyzes the formation of 6,7-dimethyl-8-ribityllumazine by condensation of 5-amino-6-(D-ribitylamino)uracil with 3,4-dihydroxy-2-butanone 4-phosphate. This is the penultimate step in the biosynthesis of riboflavin. This chain is 6,7-dimethyl-8-ribityllumazine synthase, found in Nitratidesulfovibrio vulgaris (strain DSM 19637 / Miyazaki F) (Desulfovibrio vulgaris).